The following is a 531-amino-acid chain: Peptide chain release factor 3 (531 aa).

One can recognise a tr-type G domain in the interval Arg-10 to Lys-278. GTP-binding positions include Ser-19 to Thr-26, Asp-87 to His-91, and Asn-141 to Asp-144.

The protein belongs to the TRAFAC class translation factor GTPase superfamily. Classic translation factor GTPase family. PrfC subfamily.

The protein resides in the cytoplasm. In terms of biological role, increases the formation of ribosomal termination complexes and stimulates activities of RF-1 and RF-2. It binds guanine nucleotides and has strong preference for UGA stop codons. It may interact directly with the ribosome. The stimulation of RF-1 and RF-2 is significantly reduced by GTP and GDP, but not by GMP. The protein is Peptide chain release factor 3 of Neisseria gonorrhoeae (strain ATCC 700825 / FA 1090).